The chain runs to 213 residues: Orotate phosphoribosyltransferase (213 aa).

A 5-phospho-alpha-D-ribose 1-diphosphate-binding site is contributed by K26. 34–35 is a binding site for orotate; the sequence is FF. 5-phospho-alpha-D-ribose 1-diphosphate contacts are provided by residues 72–73, R99, K100, K103, H105, and 124–132; these read YK and DDVITAGTA. Residues T128 and R156 each coordinate orotate.

This sequence belongs to the purine/pyrimidine phosphoribosyltransferase family. PyrE subfamily. In terms of assembly, homodimer. Mg(2+) serves as cofactor.

The enzyme catalyses orotidine 5'-phosphate + diphosphate = orotate + 5-phospho-alpha-D-ribose 1-diphosphate. It functions in the pathway pyrimidine metabolism; UMP biosynthesis via de novo pathway; UMP from orotate: step 1/2. Functionally, catalyzes the transfer of a ribosyl phosphate group from 5-phosphoribose 1-diphosphate to orotate, leading to the formation of orotidine monophosphate (OMP). This is Orotate phosphoribosyltransferase from Shigella sonnei (strain Ss046).